The following is a 356-amino-acid chain: Butyrate kinase (356 aa).

This sequence belongs to the acetokinase family.

The protein resides in the cytoplasm. It catalyses the reaction butanoate + ATP = butanoyl phosphate + ADP. It functions in the pathway lipid metabolism; butanoate metabolism. In terms of biological role, catalyzes the conversion of butyryl-CoA through butyryl phosphate to butyrate. The sequence is that of Butyrate kinase (buk) from Clostridium perfringens (strain ATCC 13124 / DSM 756 / JCM 1290 / NCIMB 6125 / NCTC 8237 / Type A).